A 114-amino-acid chain; its full sequence is Ribonuclease P protein component (114 aa).

Belongs to the RnpA family. As to quaternary structure, consists of a catalytic RNA component (M1 or rnpB) and a protein subunit.

The enzyme catalyses Endonucleolytic cleavage of RNA, removing 5'-extranucleotides from tRNA precursor.. Functionally, RNaseP catalyzes the removal of the 5'-leader sequence from pre-tRNA to produce the mature 5'-terminus. It can also cleave other RNA substrates such as 4.5S RNA. The protein component plays an auxiliary but essential role in vivo by binding to the 5'-leader sequence and broadening the substrate specificity of the ribozyme. The protein is Ribonuclease P protein component of Borrelia turicatae (strain 91E135).